Consider the following 2144-residue polypeptide: HEAT repeat-containing protein 1 (2144 aa).

Met-1 is modified (N-acetylmethionine). Thr-2 carries the post-translational modification N-acetylthreonine; in HEAT repeat-containing protein 1, N-terminally processed. Ser-516 is modified (phosphoserine). The stretch at 913 to 951 (ASISSPVVTSLLINLGSPVKEVRRAAIQCLQALSGVASP) is one HEAT 1 repeat. The interval 1170–1191 (KAKPLGTVQQKRRQKMQQKKSQ) is disordered. The residue at position 1190 (Ser-1190) is a Phosphoserine. Residues 1347–1385 (NKTVKMVIPALIQSDSGDSIEVSRNVEEIVVKIISVFVD) form an HEAT 2 repeat. Phosphoserine is present on Ser-1492. HEAT repeat units follow at residues 1594 to 1632 (LLPTETFIPVIRGLVGNPLPSVRRKALDLLNNKLQQNIS), 1730 to 1770 (IPQL…VVET), and 2100 to 2138 (IVLLPESIPFLAELMEDECEEVEHQCQKTIQQLETVLGE).

This sequence belongs to the HEATR1/UTP10 family. In terms of assembly, part of the small subunit (SSU) processome, composed of more than 70 proteins and the RNA chaperone small nucleolar RNA (snoRNA) U3. Interacts with MYC; the interaction is required for localization of MYC to the nucleolus.

The protein localises to the nucleus. It localises to the nucleolus. Its function is as follows. Ribosome biogenesis factor; required for recruitment of Myc to nucleoli. Involved in nucleolar processing of pre-18S ribosomal RNA. Required for optimal pre-ribosomal RNA transcription by RNA polymerase I. Part of the small subunit (SSU) processome, first precursor of the small eukaryotic ribosomal subunit. During the assembly of the SSU processome in the nucleolus, many ribosome biogenesis factors, an RNA chaperone and ribosomal proteins associate with the nascent pre-rRNA and work in concert to generate RNA folding, modifications, rearrangements and cleavage as well as targeted degradation of pre-ribosomal RNA by the RNA exosome. Involved in neuronal-lineage cell proliferation. The sequence is that of HEAT repeat-containing protein 1 from Homo sapiens (Human).